The primary structure comprises 62 residues: UPF0339 protein Atu5359 (62 aa).

It belongs to the UPF0339 family.

The polypeptide is UPF0339 protein Atu5359 (Agrobacterium fabrum (strain C58 / ATCC 33970) (Agrobacterium tumefaciens (strain C58))).